Here is a 307-residue protein sequence, read N- to C-terminus: Glycine--tRNA ligase alpha subunit (307 aa).

It belongs to the class-II aminoacyl-tRNA synthetase family. As to quaternary structure, tetramer of two alpha and two beta subunits.

The protein localises to the cytoplasm. It catalyses the reaction tRNA(Gly) + glycine + ATP = glycyl-tRNA(Gly) + AMP + diphosphate. The sequence is that of Glycine--tRNA ligase alpha subunit from Xylella fastidiosa (strain M23).